The primary structure comprises 950 residues: Protocadherin alpha-9 (950 aa).

Positions 1–29 (MLYSSRGDPEGQPLLLSLLILAMWVVGSG) are cleaved as a signal peptide. Cadherin domains lie at 30 to 133 (QLHY…PPVF), 134 to 242 (PATQ…APVF), 243 to 350 (DRTL…APQL), 351 to 455 (TIKT…APAF), 456 to 565 (AQPE…APAL), and 588 to 678 (GVVV…APKS). At 30 to 697 (QLHYSVPEEA…GPEVTLVDVN (668 aa)) the chain is on the extracellular side. Asparagine 254 and asparagine 265 each carry an N-linked (GlcNAc...) asparagine glycan. N-linked (GlcNAc...) asparagine glycosylation occurs at asparagine 548. The chain crosses the membrane as a helical span at residues 698–718 (VYLIIAICAVSSLLVLTLLLY). Topologically, residues 719–950 (TVLRCSAMPT…GNSTTDNSDQ (232 aa)) are cytoplasmic. Residues 734-737 (PGKP) form a PXXP 1 repeat. The interval 734 to 894 (PGKPTLVCSS…PDKFIIPGSP (161 aa)) is 5 X 4 AA repeats of P-X-X-P. Disordered stretches follow at residues 759–808 (CSGE…DWRY) and 827–950 (ILRA…NSDQ). Residues 789-798 (PSASSDSSGK) are compositionally biased toward polar residues. 4 PXXP repeats span residues 799–802 (PRQP), 832–835 (PGGP), 873–876 (PGNP), and 891–894 (PGSP). The segment covering 909 to 923 (DKSDFITFGKKEETK) has biased composition (basic and acidic residues).

Its subcellular location is the cell membrane. Potential calcium-dependent cell-adhesion protein. May be involved in the establishment and maintenance of specific neuronal connections in the brain. This chain is Protocadherin alpha-9 (PCDHA9), found in Pan troglodytes (Chimpanzee).